Consider the following 206-residue polypeptide: Large ribosomal subunit protein uL4 (206 aa).

The segment at 63–93 (MYKQKGTGRARHHSARAPQFRGGGKAHGPVV) is disordered. A compositionally biased stretch (basic residues) spans 64–77 (YKQKGTGRARHHSA).

The protein belongs to the universal ribosomal protein uL4 family. Part of the 50S ribosomal subunit.

In terms of biological role, one of the primary rRNA binding proteins, this protein initially binds near the 5'-end of the 23S rRNA. It is important during the early stages of 50S assembly. It makes multiple contacts with different domains of the 23S rRNA in the assembled 50S subunit and ribosome. Its function is as follows. Forms part of the polypeptide exit tunnel. The chain is Large ribosomal subunit protein uL4 from Sinorhizobium medicae (strain WSM419) (Ensifer medicae).